Consider the following 397-residue polypeptide: Elongation factor Tu (397 aa).

Residues 10-207 enclose the tr-type G domain; it reads KPHVNIGTLG…AVDNNIPDPV (198 aa). A G1 region spans residues 19–26; that stretch reads GHVDHGKT. 19 to 26 is a binding site for GTP; it reads GHVDHGKT. Thr-26 is a Mg(2+) binding site. Residues 63 to 67 are G2; it reads GITIN. The interval 84-87 is G3; the sequence is DAPG. GTP contacts are provided by residues 84 to 88 and 139 to 142; these read DAPGH and NKSD. The segment at 139–142 is G4; that stretch reads NKSD. The interval 177 to 179 is G5; sequence SGL.

It belongs to the TRAFAC class translation factor GTPase superfamily. Classic translation factor GTPase family. EF-Tu/EF-1A subfamily. Monomer.

The protein resides in the cytoplasm. It catalyses the reaction GTP + H2O = GDP + phosphate + H(+). Its function is as follows. GTP hydrolase that promotes the GTP-dependent binding of aminoacyl-tRNA to the A-site of ribosomes during protein biosynthesis. The protein is Elongation factor Tu of Leifsonia xyli subsp. xyli (strain CTCB07).